The chain runs to 629 residues: 1-deoxy-D-xylulose-5-phosphate synthase (629 aa).

Thiamine diphosphate is bound by residues histidine 78 and 119–121 (AHS). Position 150 (aspartate 150) interacts with Mg(2+). Thiamine diphosphate contacts are provided by residues 151–152 (GA), asparagine 179, tyrosine 286, and glutamate 368. Asparagine 179 serves as a coordination point for Mg(2+).

Belongs to the transketolase family. DXPS subfamily. In terms of assembly, homodimer. The cofactor is Mg(2+). It depends on thiamine diphosphate as a cofactor.

The enzyme catalyses D-glyceraldehyde 3-phosphate + pyruvate + H(+) = 1-deoxy-D-xylulose 5-phosphate + CO2. It functions in the pathway metabolic intermediate biosynthesis; 1-deoxy-D-xylulose 5-phosphate biosynthesis; 1-deoxy-D-xylulose 5-phosphate from D-glyceraldehyde 3-phosphate and pyruvate: step 1/1. In terms of biological role, catalyzes the acyloin condensation reaction between C atoms 2 and 3 of pyruvate and glyceraldehyde 3-phosphate to yield 1-deoxy-D-xylulose-5-phosphate (DXP). In Acidovorax sp. (strain JS42), this protein is 1-deoxy-D-xylulose-5-phosphate synthase.